The following is a 128-amino-acid chain: Large ribosomal subunit protein bL12 (128 aa).

It belongs to the bacterial ribosomal protein bL12 family. Homodimer. Part of the ribosomal stalk of the 50S ribosomal subunit. Forms a multimeric L10(L12)X complex, where L10 forms an elongated spine to which 2 to 4 L12 dimers bind in a sequential fashion. Binds GTP-bound translation factors.

Its function is as follows. Forms part of the ribosomal stalk which helps the ribosome interact with GTP-bound translation factors. Is thus essential for accurate translation. This Desulfovibrio desulfuricans (strain ATCC 27774 / DSM 6949 / MB) protein is Large ribosomal subunit protein bL12.